Reading from the N-terminus, the 154-residue chain is Transcriptional repressor NrdR (154 aa).

The segment at 3–34 is a zinc-finger region; sequence CPFCRHPDSRVVDSRETDEGQAIRRRRSCPEC. The ATP-cone domain maps to 46-136; that stretch reads LAVVKRSGVT…VYRSFESAAD (91 aa).

Belongs to the NrdR family. The cofactor is Zn(2+).

Functionally, negatively regulates transcription of bacterial ribonucleotide reductase nrd genes and operons by binding to NrdR-boxes. The polypeptide is Transcriptional repressor NrdR (Mycobacterium sp. (strain JLS)).